Reading from the N-terminus, the 65-residue chain is Conotoxin Am6.4 (65 aa).

A disordered region spans residues 1–33 (STGKRNAGKLTVTDDVEADRDTDPDDKDPSVHN). Residues 1-36 (STGKRNAGKLTVTDDVEADRDTDPDDKDPSVHNSWR) constitute a propeptide that is removed on maturation. A compositionally biased stretch (acidic residues) spans 14-26 (DDVEADRDTDPDD). 3 disulfides stabilise this stretch: Cys40/Cys50, Cys45/Cys59, and Cys49/Cys64.

Post-translationally, is not hydroxylated. Expressed by the venom duct.

Its subcellular location is the secreted. Functionally, probable toxin that inhibits ion channels. The protein is Conotoxin Am6.4 of Conus amadis (Amadis cone).